The primary structure comprises 425 residues: Histone-binding protein RBBP4 (425 aa).

N-acetylalanine is present on Ala2. WD repeat units lie at residues 32–125 (YDLV…NHEG), 126–175 (EVNR…RLRG), 176–223 (HQKE…KTIF), 225–270 (GHTA…HSVD), 271–314 (AHTA…HSFE), 315–371 (SHKD…FIHG), and 372–404 (GHTA…VWQM). Positions 361 to 406 (DGPPELLFIHGGHTAKISDFSWNPNEPWVICSVSEDNIMQVWQMAE) are interaction with HAT1.

Belongs to the WD repeat RBAP46/RBAP48/MSI1 family. As to quaternary structure, binds directly to histone H4, probably via helix 1 of the histone fold, a region that is not accessible when histone H4 is in chromatin. Interacts with CHAF1A, HDAC1, HDAC2, HDAC3 and HIRA. May also interact with HAT1.

The protein resides in the nucleus. It localises to the chromosome. It is found in the telomere. Core histone-binding subunit that may target chromatin assembly factors, chromatin remodeling factors and histone deacetylases to their histone substrates in a manner that is regulated by nucleosomal DNA. Component of several complexes which regulate chromatin metabolism. In Gallus gallus (Chicken), this protein is Histone-binding protein RBBP4 (RBBP4).